Consider the following 474-residue polypeptide: Pyruvate kinase (474 aa).

Arginine 32 serves as a coordination point for substrate. Residues asparagine 34, serine 36, and aspartate 66 each contribute to the K(+) site. 34 to 37 lines the ATP pocket; that stretch reads NFSH. ATP-binding residues include arginine 73 and lysine 155. Glutamate 221 lines the Mg(2+) pocket. Substrate-binding residues include glycine 244, aspartate 245, and threonine 277. Residue aspartate 245 participates in Mg(2+) binding.

This sequence belongs to the pyruvate kinase family. In terms of assembly, homotetramer. Mg(2+) is required as a cofactor. Requires K(+) as cofactor.

The enzyme catalyses pyruvate + ATP = phosphoenolpyruvate + ADP + H(+). Its pathway is carbohydrate degradation; glycolysis; pyruvate from D-glyceraldehyde 3-phosphate: step 5/5. The protein is Pyruvate kinase (pykF) of Clostridium perfringens (strain 13 / Type A).